The primary structure comprises 507 residues: ATP synthase subunit alpha (507 aa).

An ATP-binding site is contributed by 169-176; sequence GDRQTGKT.

This sequence belongs to the ATPase alpha/beta chains family. In terms of assembly, F-type ATPases have 2 components, CF(1) - the catalytic core - and CF(0) - the membrane proton channel. CF(1) has five subunits: alpha(3), beta(3), gamma(1), delta(1), epsilon(1). CF(0) has three main subunits: a(1), b(2) and c(9-12). The alpha and beta chains form an alternating ring which encloses part of the gamma chain. CF(1) is attached to CF(0) by a central stalk formed by the gamma and epsilon chains, while a peripheral stalk is formed by the delta and b chains. In this bacterium the a and b subunits are transcribed but do not seem to be translated, thus the ATP synthase consists of the alpha, beta, gamma, delta, epsilon and c subunits.

The protein localises to the cell membrane. It catalyses the reaction ATP + H2O + 4 H(+)(in) = ADP + phosphate + 5 H(+)(out). Its function is as follows. Produces ATP from ADP in the presence of a proton gradient across the membrane. The alpha chain is a regulatory subunit. In Moorella thermoacetica (strain ATCC 39073 / JCM 9320), this protein is ATP synthase subunit alpha.